We begin with the raw amino-acid sequence, 185 residues long: Large ribosomal subunit protein uL5 (185 aa).

It belongs to the universal ribosomal protein uL5 family. Part of the 50S ribosomal subunit; part of the 5S rRNA/L5/L18/L25 subcomplex. Contacts the 5S rRNA and the P site tRNA. Forms a bridge to the 30S subunit in the 70S ribosome.

In terms of biological role, this is one of the proteins that bind and probably mediate the attachment of the 5S RNA into the large ribosomal subunit, where it forms part of the central protuberance. In the 70S ribosome it contacts protein S13 of the 30S subunit (bridge B1b), connecting the 2 subunits; this bridge is implicated in subunit movement. Contacts the P site tRNA; the 5S rRNA and some of its associated proteins might help stabilize positioning of ribosome-bound tRNAs. This is Large ribosomal subunit protein uL5 from Rhodopseudomonas palustris (strain BisA53).